The following is a 144-amino-acid chain: UPF0179 protein PF1381 (144 aa).

The protein belongs to the UPF0179 family.

The polypeptide is UPF0179 protein PF1381 (Pyrococcus furiosus (strain ATCC 43587 / DSM 3638 / JCM 8422 / Vc1)).